A 488-amino-acid chain; its full sequence is Aspartyl/glutamyl-tRNA(Asn/Gln) amidotransferase subunit B (488 aa).

It belongs to the GatB/GatE family. GatB subfamily. In terms of assembly, heterotrimer of A, B and C subunits.

It carries out the reaction L-glutamyl-tRNA(Gln) + L-glutamine + ATP + H2O = L-glutaminyl-tRNA(Gln) + L-glutamate + ADP + phosphate + H(+). It catalyses the reaction L-aspartyl-tRNA(Asn) + L-glutamine + ATP + H2O = L-asparaginyl-tRNA(Asn) + L-glutamate + ADP + phosphate + 2 H(+). Allows the formation of correctly charged Asn-tRNA(Asn) or Gln-tRNA(Gln) through the transamidation of misacylated Asp-tRNA(Asn) or Glu-tRNA(Gln) in organisms which lack either or both of asparaginyl-tRNA or glutaminyl-tRNA synthetases. The reaction takes place in the presence of glutamine and ATP through an activated phospho-Asp-tRNA(Asn) or phospho-Glu-tRNA(Gln). The polypeptide is Aspartyl/glutamyl-tRNA(Asn/Gln) amidotransferase subunit B (Neorickettsia sennetsu (strain ATCC VR-367 / Miyayama) (Ehrlichia sennetsu)).